Reading from the N-terminus, the 358-residue chain is Arogenate dehydrogenase 2, chloroplastic (358 aa).

The transit peptide at 1–36 (MLLHFSPAKPLISPPNLRRNSPTFLISPPRSLRIRA) directs the protein to the chloroplast. The 280-residue stretch at 59-338 (LKIAVLGFGN…KKTEQKLLND (280 aa)) folds into the Prephenate/arogenate dehydrogenase domain. The interval 336 to 358 (LNDGGVVPMNDISSSSSSSSSSS) is disordered. Over residues 348-358 (SSSSSSSSSSS) the composition is skewed to low complexity.

Belongs to the prephenate/arogenate dehydrogenase family. In terms of tissue distribution, expressed in roots, stems, leaves, flowers, siliques and seeds. More abundant in seeds.

Its subcellular location is the plastid. It localises to the chloroplast. It carries out the reaction L-arogenate + NADP(+) = L-tyrosine + CO2 + NADPH. Its pathway is amino-acid biosynthesis; L-tyrosine biosynthesis; L-tyrosine from L-arogenate (NADP(+) route): step 1/1. Involved in the biosynthesis of tyrosine. Has a weak prephenate dehydrogenase activity. In Arabidopsis thaliana (Mouse-ear cress), this protein is Arogenate dehydrogenase 2, chloroplastic (TYRAAT2).